The primary structure comprises 196 residues: dTDP-4-dehydro-6-deoxyglucose 3-epimerase (196 aa).

Residues Arg-21, Glu-26, 45–47, and Arg-57 contribute to the substrate site; that span reads QVN. The active-site Proton acceptor is His-60. The substrate site is built by Lys-70 and Arg-117. Residue Tyr-130 is the Proton donor of the active site. 2 residues coordinate substrate: Glu-141 and Arg-166.

The protein belongs to the dTDP-4-dehydrorhamnose 3,5-epimerase family. In terms of assembly, homodimer.

It catalyses the reaction dTDP-4-dehydro-6-deoxy-alpha-D-glucose = dTDP-4-dehydro-6-deoxy-alpha-D-allose. It participates in antibiotic biosynthesis. Involved in the biosynthesis of dTDP-6-deoxy-D-allose, an intermediate in the biosynthesis of mycinose, which is one of the two unusual sugars attached to the 16-membered macrolactone ring of the aglycone antibiotic chalcomycin. Catalyzes the conversion of dTDP-4-oxo-6-deoxyglucose to dTDP-4-oxo-6-deoxyallose, via a C-3 epimerization. This chain is dTDP-4-dehydro-6-deoxyglucose 3-epimerase, found in Streptomyces bikiniensis.